The chain runs to 62 residues: Ferredoxin-1 (62 aa).

4Fe-4S ferredoxin-type domains are found at residues 2–28 (ALYI…SAGS) and 29–62 (EIYV…IVQG). [4Fe-4S] cluster contacts are provided by cysteine 9, cysteine 12, cysteine 15, cysteine 19, cysteine 38, cysteine 41, cysteine 50, and cysteine 54.

The cofactor is [4Fe-4S] cluster.

Its function is as follows. Ferredoxins are iron-sulfur proteins that transfer electrons in a wide variety of metabolic reactions. This Chlorobaculum tepidum (strain ATCC 49652 / DSM 12025 / NBRC 103806 / TLS) (Chlorobium tepidum) protein is Ferredoxin-1.